The chain runs to 353 residues: MKFALTGGGTGGHLSIAKALAIELEKQGVEAIYLGSTYGQDKEWFENSPLFSERYFFNTQGVVNKSFFKKINSLFLQVKAAFKAKEILKKHQITHTISVGGFSAGPASFASLLNHIPLYIHEQNAIKGSLNRYLSPKAKAVFSSYAFKDKGNHVLTSYPVQNAFFDYARTRAEIKHILFLGGSQGAKAINEFALLNAPKLTKQGIKITHICGSDAHEKMRFFYQELGLLDKIELFAFHNNIIEVMRRADLCVSRAGASSVWELCANGLPTIFIPYPFASNNHQYYNVLEFEKENLCYVVPQNELLPKKLFEVIRKLNQKDDQGNKNLTIISAKLQQKIAKDGAKTIIETILSA.

UDP-N-acetyl-alpha-D-glucosamine-binding positions include 10 to 12 (TGG), Asn124, Ser183, and Gln283.

Belongs to the glycosyltransferase 28 family. MurG subfamily.

The protein resides in the cell inner membrane. It catalyses the reaction di-trans,octa-cis-undecaprenyl diphospho-N-acetyl-alpha-D-muramoyl-L-alanyl-D-glutamyl-meso-2,6-diaminopimeloyl-D-alanyl-D-alanine + UDP-N-acetyl-alpha-D-glucosamine = di-trans,octa-cis-undecaprenyl diphospho-[N-acetyl-alpha-D-glucosaminyl-(1-&gt;4)]-N-acetyl-alpha-D-muramoyl-L-alanyl-D-glutamyl-meso-2,6-diaminopimeloyl-D-alanyl-D-alanine + UDP + H(+). It participates in cell wall biogenesis; peptidoglycan biosynthesis. Functionally, cell wall formation. Catalyzes the transfer of a GlcNAc subunit on undecaprenyl-pyrophosphoryl-MurNAc-pentapeptide (lipid intermediate I) to form undecaprenyl-pyrophosphoryl-MurNAc-(pentapeptide)GlcNAc (lipid intermediate II). The protein is UDP-N-acetylglucosamine--N-acetylmuramyl-(pentapeptide) pyrophosphoryl-undecaprenol N-acetylglucosamine transferase of Helicobacter pylori (strain P12).